A 146-amino-acid chain; its full sequence is Hemoglobin subunit beta (146 aa).

Valine 1 bears the N-acetylvaline mark. Positions 2–146 constitute a Globin domain; sequence HLSADEKNAL…VANALAHKYH (145 aa). At serine 44 the chain carries Phosphoserine. Lysine 59 carries the N6-acetyllysine modification. Position 63 (histidine 63) interacts with heme b. The residue at position 82 (lysine 82) is an N6-acetyllysine. Residue histidine 92 participates in heme b binding. At cysteine 93 the chain carries S-nitrosocysteine. Lysine 144 carries the N6-acetyllysine modification.

The protein belongs to the globin family. In terms of assembly, heterotetramer of two alpha chains and two beta chains. Red blood cells.

In terms of biological role, involved in oxygen transport from the lung to the various peripheral tissues. In Sciurus carolinensis (Eastern gray squirrel), this protein is Hemoglobin subunit beta.